A 137-amino-acid polypeptide reads, in one-letter code: uncharacterized protein (137 aa).

A compositionally biased stretch (low complexity) spans Met1–Pro10. Residues Met1–Val23 form a disordered region. Positions Gly11–Ala20 are enriched in gly residues.

This is an uncharacterized protein from Human adenovirus C serotype 2 (HAdV-2).